Here is a 601-residue protein sequence, read N- to C-terminus: DNA ligase (601 aa).

Asp-258 provides a ligand contact to ATP. Lys-260 serves as the catalytic N6-AMP-lysine intermediate. Residues Arg-265, Arg-280, Glu-310, Phe-350, Arg-427, and Lys-433 each coordinate ATP. Positions 568-601 are disordered; it reads DKSPEDATTTDEILEMYNKQPKKKIESPPIDESV.

This sequence belongs to the ATP-dependent DNA ligase family. Requires Mg(2+) as cofactor.

It carries out the reaction ATP + (deoxyribonucleotide)n-3'-hydroxyl + 5'-phospho-(deoxyribonucleotide)m = (deoxyribonucleotide)n+m + AMP + diphosphate.. In terms of biological role, DNA ligase that seals nicks in double-stranded DNA during DNA replication, DNA recombination and DNA repair. This is DNA ligase from Saccharolobus islandicus (strain Y.N.15.51 / Yellowstone #2) (Sulfolobus islandicus).